A 225-amino-acid polypeptide reads, in one-letter code: tRNA (guanine-N(1)-)-methyltransferase (225 aa).

S-adenosyl-L-methionine is bound by residues Gly-112 and 132–137 (IGDYVL).

This sequence belongs to the RNA methyltransferase TrmD family. In terms of assembly, homodimer.

Its subcellular location is the cytoplasm. It catalyses the reaction guanosine(37) in tRNA + S-adenosyl-L-methionine = N(1)-methylguanosine(37) in tRNA + S-adenosyl-L-homocysteine + H(+). Specifically methylates guanosine-37 in various tRNAs. In Porphyromonas gingivalis (strain ATCC BAA-308 / W83), this protein is tRNA (guanine-N(1)-)-methyltransferase.